Here is a 67-residue protein sequence, read N- to C-terminus: Copper transport protein ATOX1 homolog (67 aa).

The HMA domain occupies 1–64 (MTYSFFVDMT…NIQKTGKKCS (64 aa)). Cu cation is bound by residues Cys11 and Cys14.

Belongs to the ATX1 family.

Could bind and deliver cytosolic copper to the copper ATPase proteins. May be important in cellular antioxidant defense. The chain is Copper transport protein ATOX1 homolog (atox1) from Dictyostelium discoideum (Social amoeba).